The chain runs to 767 residues: Photosystem I P700 chlorophyll a apoprotein A1 (767 aa).

Helical transmembrane passes span 72-95 (IFSAHFGHLAVIFIWLSGAFFHGA), 158-181 (LMALAIGALVMAGLMLNAGVFHYH), 197-221 (LNHHLAGLLGLGSLSWAGHVIHVSA), 305-323 (IAHHHVAIAVMFIVAGHMY), 364-387 (WHAQLAVNLAIGGSVSIIVAQHMY), 403-429 (IGLFTHHIWIGGFLIVGAGAHAAIAMV), 451-473 (AIISHLNWVCIWLGAHSFGLYIH), and 548-566 (FMVHHIHAFTIHVTVLILL). C590 and C599 together coordinate [4Fe-4S] cluster. The next 2 membrane-spanning stretches (helical) occupy residues 606 to 627 (HVFLGLFWMYNSLSIVIFHFSW) and 681 to 703 (TAAYGIMFLGAHFVFAFSLMFLF). H692 contacts chlorophyll a'. Chlorophyll a contacts are provided by M700 and Y708. A phylloquinone-binding site is contributed by W709. The chain crosses the membrane as a helical span at residues 741–761 (AVGVAHYLLGGIATTWAFFHA).

This sequence belongs to the PsaA/PsaB family. The PsaA/B heterodimer binds the P700 chlorophyll special pair and subsequent electron acceptors. PSI consists of a core antenna complex that captures photons, and an electron transfer chain that converts photonic excitation into a charge separation. The cyanobacterial PSI reaction center is composed of one copy each of PsaA,B,C,D,E,F,I,J,K,L,M and X, and forms trimeric complexes. PSI electron transfer chain: 5 chlorophyll a, 1 chlorophyll a', 2 phylloquinones and 3 4Fe-4S clusters. PSI core antenna: 90 chlorophyll a, 22 carotenoids, 3 phospholipids and 1 galactolipid. P700 is a chlorophyll a/chlorophyll a' dimer, A0 is one or more chlorophyll a, A1 is one or both phylloquinones and FX is a shared 4Fe-4S iron-sulfur center. serves as cofactor.

The protein localises to the cellular thylakoid membrane. It carries out the reaction reduced [plastocyanin] + hnu + oxidized [2Fe-2S]-[ferredoxin] = oxidized [plastocyanin] + reduced [2Fe-2S]-[ferredoxin]. Functionally, psaA and PsaB bind P700, the primary electron donor of photosystem I (PSI), as well as the electron acceptors A0, A1 and FX. PSI is a plastocyanin/cytochrome c6-ferredoxin oxidoreductase, converting photonic excitation into a charge separation, which transfers an electron from the donor P700 chlorophyll pair to the spectroscopically characterized acceptors A0, A1, FX, FA and FB in turn. Oxidized P700 is reduced on the lumenal side of the thylakoid membrane by plastocyanin or cytochrome c6. The polypeptide is Photosystem I P700 chlorophyll a apoprotein A1 (Synechococcus sp. (strain CC9605)).